A 157-amino-acid chain; its full sequence is 6,7-dimethyl-8-ribityllumazine synthase (157 aa).

5-amino-6-(D-ribitylamino)uracil is bound by residues phenylalanine 22, 57–59 (AYE), and 81–83 (TVI). A (2S)-2-hydroxy-3-oxobutyl phosphate-binding site is contributed by 86 to 87 (GT). The active-site Proton donor is the histidine 89. Position 114 (phenylalanine 114) interacts with 5-amino-6-(D-ribitylamino)uracil. Arginine 128 lines the (2S)-2-hydroxy-3-oxobutyl phosphate pocket.

It belongs to the DMRL synthase family. In terms of assembly, forms an icosahedral capsid composed of 60 subunits, arranged as a dodecamer of pentamers.

It catalyses the reaction (2S)-2-hydroxy-3-oxobutyl phosphate + 5-amino-6-(D-ribitylamino)uracil = 6,7-dimethyl-8-(1-D-ribityl)lumazine + phosphate + 2 H2O + H(+). It functions in the pathway cofactor biosynthesis; riboflavin biosynthesis; riboflavin from 2-hydroxy-3-oxobutyl phosphate and 5-amino-6-(D-ribitylamino)uracil: step 1/2. Functionally, catalyzes the formation of 6,7-dimethyl-8-ribityllumazine by condensation of 5-amino-6-(D-ribitylamino)uracil with 3,4-dihydroxy-2-butanone 4-phosphate. This is the penultimate step in the biosynthesis of riboflavin. In Haemophilus influenzae (strain ATCC 51907 / DSM 11121 / KW20 / Rd), this protein is 6,7-dimethyl-8-ribityllumazine synthase.